Reading from the N-terminus, the 302-residue chain is Protein FdhE homolog (302 aa).

This sequence belongs to the FdhE family.

It localises to the cytoplasm. Its function is as follows. Necessary for formate dehydrogenase activity. The sequence is that of Protein FdhE homolog from Shewanella sp. (strain MR-4).